The following is a 298-amino-acid chain: Transcription factor RHD6 (298 aa).

2 disordered regions span residues 1–58 and 157–213; these read MALV…SDHQ and TGSR…AKNR. A compositionally biased stretch (low complexity) spans 15-27; that stretch reads SKQNSSSSEDLSS. Composition is skewed to polar residues over residues 157–168 and 177–190; these read TGSRNESLSPKS and GEST…SSGV. The span at 191 to 205 shows a compositional bias: low complexity; sequence TGKTKPKPTTSPKDP. The segment at 201–214 is basic motif; sequence SPKDPQSLAAKNRR. The 50-residue stretch at 201 to 250 folds into the bHLH domain; that stretch reads SPKDPQSLAAKNRRERISERLKILQELVPNGTKVDLVTMLEKAISYVKFL. Residues 215 to 250 are helix-loop-helix motif; it reads ERISERLKILQELVPNGTKVDLVTMLEKAISYVKFL.

As to quaternary structure, homodimer. Forms heterodimers with RSL1. Interacts with TIFY10B/JAZ2, TIFY6A/JAZ4, TIFY5A/JAZ8, TIFY7/JAZ9 and TIFY9/JAZ10. In terms of tissue distribution, expressed constitutively in flowers. Expressed in root epidermal hair cells.

The protein resides in the nucleus. Transcription factor that is specifically required for the development of root hairs. Acts with RSL1 to positively regulate root hair development. Acts downstream of genes that regulate epidermal pattern formation, such as GL2. Targets directly RSL4, another transcription factor involved in the regulation of root hair elongation. Acts with RSL1 as transcription factor that integrates a jasmonate (JA) signaling pathway that stimulates root hair growth. The chain is Transcription factor RHD6 from Arabidopsis thaliana (Mouse-ear cress).